Consider the following 196-residue polypeptide: Lipoprotein signal peptidase (196 aa).

Positions Met-1–Ser-24 are disordered. The next 3 helical transmembrane spans lie at Ile-40 to Leu-60, Ile-92 to Phe-112, and Leu-118 to Leu-138. Active-site residues include Asp-155 and Asp-169. The chain crosses the membrane as a helical span at residues Val-164–Phe-184.

The protein belongs to the peptidase A8 family.

Its subcellular location is the cell membrane. It catalyses the reaction Release of signal peptides from bacterial membrane prolipoproteins. Hydrolyzes -Xaa-Yaa-Zaa-|-(S,diacylglyceryl)Cys-, in which Xaa is hydrophobic (preferably Leu), and Yaa (Ala or Ser) and Zaa (Gly or Ala) have small, neutral side chains.. It participates in protein modification; lipoprotein biosynthesis (signal peptide cleavage). This protein specifically catalyzes the removal of signal peptides from prolipoproteins. This Streptomyces griseus subsp. griseus (strain JCM 4626 / CBS 651.72 / NBRC 13350 / KCC S-0626 / ISP 5235) protein is Lipoprotein signal peptidase.